Reading from the N-terminus, the 158-residue chain is MSQSVPMTEEGYRSLQDELKHLIRVERPKVVQDIAEARSHGDLSENAEYDAAKNRQGFIEGRIKELNDKIARAEVIKPGDVVTDKIVFGASVTLFDVDTDSEVTYKIVGEDEADLKHGKISVTSPVGRALIGHRLDDEVRIKVPSGLKIYEVVNIAYM.

Residues 48-74 are a coiled coil; that stretch reads EYDAAKNRQGFIEGRIKELNDKIARAE.

The protein belongs to the GreA/GreB family.

Necessary for efficient RNA polymerase transcription elongation past template-encoded arresting sites. The arresting sites in DNA have the property of trapping a certain fraction of elongating RNA polymerases that pass through, resulting in locked ternary complexes. Cleavage of the nascent transcript by cleavage factors such as GreA or GreB allows the resumption of elongation from the new 3'terminus. GreA releases sequences of 2 to 3 nucleotides. The sequence is that of Transcription elongation factor GreA from Syntrophotalea carbinolica (strain DSM 2380 / NBRC 103641 / GraBd1) (Pelobacter carbinolicus).